Consider the following 811-residue polypeptide: Lysine-specific histone demethylase 1 homolog 3 (811 aa).

Over residues 1-10 (MSDQPPPYTP) the composition is skewed to pro residues. Residues 1–79 (MSDQPPPYTP…PSAQPPPRAS (79 aa)) are disordered. Residues 44–55 (NKRKRTGFRRKL) are compositionally biased toward basic residues. Residues 56 to 71 (PSGSPAAPVAVAASPS) show a composition bias toward low complexity. An SWIRM domain is found at 88-189 (NREPTAEAVT…FGVAPAIKER (102 aa)). 4 residues coordinate FAD: Glu227, Arg229, Arg235, and Glu609. A disordered region spans residues 790 to 811 (RNSSRTKTRPSKLKIGIPKSKS).

It belongs to the flavin monoamine oxidase family. FAD is required as a cofactor.

In terms of biological role, probable histone demethylase. This is Lysine-specific histone demethylase 1 homolog 3 from Oryza sativa subsp. japonica (Rice).